The following is a 450-amino-acid chain: Thiamine biosynthesis regulatory protein (450 aa).

Positions 1–12 (MVNSKRQQRSKK) are enriched in basic residues. The segment at 1–23 (MVNSKRQQRSKKVASSSKVPPTK) is disordered. A compositionally biased stretch (low complexity) spans 13–23 (VASSSKVPPTK). The segment at residues 30 to 57 (CWACRFKKRRCDENRPICSLCAKHGDNC) is a DNA-binding region (zn(2)-C6 fungal-type). Positions 210–234 (TDQLPSPGHSMSSAEETTTAALSSP) are disordered.

It localises to the nucleus. Its function is as follows. Positive regulator of thiamine biosynthesis. The polypeptide is Thiamine biosynthesis regulatory protein (THI2) (Saccharomyces cerevisiae (strain ATCC 204508 / S288c) (Baker's yeast)).